Consider the following 181-residue polypeptide: ADP-ribosylation factor 1 (181 aa).

Residue G2 is the site of N-myristoyl glycine attachment. Residues 3–16 (LYVSRLFNRLFQKK) form an important for the stable binding to the membranes region. GTP is bound by residues 27 to 32 (AAGKTT), 126 to 129 (NKQD), and A160.

The protein belongs to the small GTPase superfamily. Arf family. In terms of assembly, may interact with GTPase RAB5b.

It localises to the golgi apparatus membrane. The enzyme catalyses GTP + H2O = GDP + phosphate + H(+). Its activity is regulated as follows. Alternates between an inactive GDP-bound form and an active GTP-bound form. Intrinsic GTPase activity is almost undetectable in vitro. Activated by a guanine nucleotide-exchange factor (GEF) and inactivated by GTPase-activating protein ARFGAP1. Functionally, small GTPase involved in protein trafficking between different compartments. Modulates vesicle budding and uncoating within the Golgi complex. In its GTP-bound form, triggers the recruitment of coatomer proteins to the Golgi membrane. The hydrolysis of ARF1-bound GTP, which is mediated by ARFGAPs proteins, is required for dissociation of coat proteins from Golgi membranes and vesicles. Regulates the transport of N-acylated AK2 to the parasitophorous vacuole membrane. May be involved in the activation of lipid kinase PIP5K. The chain is ADP-ribosylation factor 1 from Plasmodium falciparum (isolate 3D7).